Reading from the N-terminus, the 291-residue chain is N-acetylmannosamine kinase (291 aa).

ATP is bound by residues 5 to 12 (AIDIGGTK) and 132 to 139 (GVGGGVVS). Residues His156, Cys166, Cys168, and Cys173 each coordinate Zn(2+).

Belongs to the ROK (NagC/XylR) family. NanK subfamily. In terms of assembly, homodimer.

The enzyme catalyses an N-acyl-D-mannosamine + ATP = an N-acyl-D-mannosamine 6-phosphate + ADP + H(+). Its pathway is amino-sugar metabolism; N-acetylneuraminate degradation; D-fructose 6-phosphate from N-acetylneuraminate: step 2/5. Catalyzes the phosphorylation of N-acetylmannosamine (ManNAc) to ManNAc-6-P. The chain is N-acetylmannosamine kinase from Escherichia coli (strain SMS-3-5 / SECEC).